The chain runs to 449 residues: Alginate biosynthesis transcriptional regulatory protein AlgB (449 aa).

The region spanning 10 to 124 (RILLVDDESA…QLRLAAAKQL (115 aa)) is the Response regulatory domain. At Asp-59 the chain carries 4-aspartylphosphate. Residues 147-376 (LESHSPAMAA…LRNVIERASI (230 aa)) enclose the Sigma-54 factor interaction domain. Residues 175-182 (GESGSGKG) and 238-247 (ADGGTLFLDE) contribute to the ATP site. Residues 426 to 445 (LDQAAKTLGIDASTLYRKRK) constitute a DNA-binding region (H-T-H motif).

Phosphorylated by KinB.

Its pathway is glycan biosynthesis; alginate biosynthesis [regulation]. Functionally, member of the two-component regulatory system AlgB/KinB involved in regulation of alginate biosynthesis genes. Positive regulator of the alginate biosynthetic gene AlgD. The sequence is that of Alginate biosynthesis transcriptional regulatory protein AlgB (algB) from Pseudomonas aeruginosa (strain ATCC 15692 / DSM 22644 / CIP 104116 / JCM 14847 / LMG 12228 / 1C / PRS 101 / PAO1).